The sequence spans 249 residues: Putative nicotinamide mononucleotide adenylyltransferase (249 aa).

NAD(+) contacts are provided by Ser-40 and Phe-41. ATP is bound at residue His-48. NAD(+) contacts are provided by Thr-97, Gly-129, Asp-131, Arg-165, and Asn-206. 214–217 (TRAR) provides a ligand contact to ATP.

This sequence belongs to the eukaryotic NMN adenylyltransferase family. POF1 subfamily.

It is found in the cytoplasm. The protein resides in the nucleus. The enzyme catalyses beta-nicotinamide D-ribonucleotide + ATP + H(+) = diphosphate + NAD(+). It functions in the pathway cofactor biosynthesis; NAD(+) biosynthesis; NAD(+) from nicotinamide D-ribonucleotide: step 1/1. Its function is as follows. Catalyzes the formation of NAD(+) from nicotinamide mononucleotide (NMN) and ATP. Involved in the salvage pathway for NAD(+) biosynthesis via NMN. The chain is Putative nicotinamide mononucleotide adenylyltransferase from Schizosaccharomyces pombe (strain 972 / ATCC 24843) (Fission yeast).